The sequence spans 259 residues: Peroxiredoxin-4 (259 aa).

In terms of domain architecture, Thioredoxin spans 66–224 (IRIRKPAPAF…AIRTLKALKF (159 aa)). Catalysis depends on Cys111, which acts as the Cysteine sulfenic acid (-SOH) intermediate.

It belongs to the peroxiredoxin family. AhpC/Prx1 subfamily. In terms of assembly, homodimer; disulfide-linked, upon oxidation. 5 homodimers assemble to form a ring-like decamer.

It is found in the cytoplasm. It localises to the endoplasmic reticulum. It catalyses the reaction a hydroperoxide + [thioredoxin]-dithiol = an alcohol + [thioredoxin]-disulfide + H2O. Its function is as follows. Thiol-specific peroxidase that catalyzes the reduction of hydrogen peroxide and organic hydroperoxides to water and alcohols, respectively. Plays a role in cell protection against oxidative stress by detoxifying peroxides and as sensor of hydrogen peroxide-mediated signaling events. Regulates the activation of NF-kappa-B in the cytosol by a modulation of I-kappa-B-alpha phosphorylation. The chain is Peroxiredoxin-4 (prdx4) from Dictyostelium discoideum (Social amoeba).